A 72-amino-acid polypeptide reads, in one-letter code: MAKEDTIQMQGEVLENLPSATFKIKLENGHVVLGHISGKMRMHYIRILPGDKVTVELTPYDLSRARIVFRAK.

An S1-like domain is found at 1–72 (MAKEDTIQMQ…SRARIVFRAK (72 aa)).

Belongs to the IF-1 family. In terms of assembly, component of the 30S ribosomal translation pre-initiation complex which assembles on the 30S ribosome in the order IF-2 and IF-3, IF-1 and N-formylmethionyl-tRNA(fMet); mRNA recruitment can occur at any time during PIC assembly.

Its subcellular location is the cytoplasm. Functionally, one of the essential components for the initiation of protein synthesis. Stabilizes the binding of IF-2 and IF-3 on the 30S subunit to which N-formylmethionyl-tRNA(fMet) subsequently binds. Helps modulate mRNA selection, yielding the 30S pre-initiation complex (PIC). Upon addition of the 50S ribosomal subunit IF-1, IF-2 and IF-3 are released leaving the mature 70S translation initiation complex. This Chromobacterium violaceum (strain ATCC 12472 / DSM 30191 / JCM 1249 / CCUG 213 / NBRC 12614 / NCIMB 9131 / NCTC 9757 / MK) protein is Translation initiation factor IF-1 2.